Consider the following 599-residue polypeptide: NADH-quinone oxidoreductase subunit C/D (599 aa).

Residues 1-190 (MMIDQIAQES…DPFELTRQKE (190 aa)) form an NADH dehydrogenase I subunit C region. The segment at 214 to 599 (DFMFLNLGPN…IDFVMSDVDR (386 aa)) is NADH dehydrogenase I subunit D.

In the N-terminal section; belongs to the complex I 30 kDa subunit family. It in the C-terminal section; belongs to the complex I 49 kDa subunit family. As to quaternary structure, NDH-1 is composed of 13 different subunits. Subunits NuoB, CD, E, F, and G constitute the peripheral sector of the complex.

Its subcellular location is the cell inner membrane. The enzyme catalyses a quinone + NADH + 5 H(+)(in) = a quinol + NAD(+) + 4 H(+)(out). In terms of biological role, NDH-1 shuttles electrons from NADH, via FMN and iron-sulfur (Fe-S) centers, to quinones in the respiratory chain. The immediate electron acceptor for the enzyme in this species is believed to be ubiquinone. Couples the redox reaction to proton translocation (for every two electrons transferred, four hydrogen ions are translocated across the cytoplasmic membrane), and thus conserves the redox energy in a proton gradient. The protein is NADH-quinone oxidoreductase subunit C/D of Photorhabdus laumondii subsp. laumondii (strain DSM 15139 / CIP 105565 / TT01) (Photorhabdus luminescens subsp. laumondii).